The primary structure comprises 119 residues: Holo-[acyl-carrier-protein] synthase (119 aa).

Mg(2+) is bound by residues Asp7 and Glu56.

Belongs to the P-Pant transferase superfamily. AcpS family. The cofactor is Mg(2+).

Its subcellular location is the cytoplasm. The catalysed reaction is apo-[ACP] + CoA = holo-[ACP] + adenosine 3',5'-bisphosphate + H(+). Its function is as follows. Transfers the 4'-phosphopantetheine moiety from coenzyme A to a Ser of acyl-carrier-protein. This Chlamydia trachomatis serovar L2 (strain ATCC VR-902B / DSM 19102 / 434/Bu) protein is Holo-[acyl-carrier-protein] synthase.